The sequence spans 583 residues: Epsin-2 (583 aa).

The a 1,2-diacyl-sn-glycero-3-phospho-(1D-myo-inositol-4,5-bisphosphate) site is built by Arg8, Lys11, Arg25, Asn30, Arg63, and His73. Residues 12 to 144 enclose the ENTH domain; it reads NIVNSYSEAE…KDEERLKVER (133 aa). The segment covering 165-181 has biased composition (polar residues); it reads QITFGRGSSQPNLSISH. The interval 165–217 is disordered; the sequence is QITFGRGSSQPNLSISHSEQEYGKAGGSPASYHGSTSPRVSSELEQARPQTSG. Omega-N-methylarginine is present on Arg170. Phosphoserine occurs at positions 173, 192, and 195. Residues 197–216 are compositionally biased toward polar residues; it reads HGSTSPRVSSELEQARPQTS. UIM domains follow at residues 218 to 237 and 243 to 262; these read EEEL…AEQE and GDDL…TVKV. Disordered regions lie at residues 293 to 384 and 411 to 457; these read SGPV…KPSP and TSKK…PESF. 4 consecutive repeat copies span residues 301-303, 313-315, 326-328, and 340-342. Residues 301-315 show a composition bias toward polar residues; the sequence is EPWSTGTPANQTNPW. Positions 301–377 are 6 X 3 AA repeats of [DE]-P-W; the sequence is EPWSTGTPAN…SDAGKTADAW (77 aa). Residues 346–355 are compositionally biased toward polar residues; the sequence is TTASIQSVPK. A run of 2 repeats spans residues 358-360 and 375-377. Ser431 carries the phosphoserine modification. Low complexity predominate over residues 437–448; sequence SQSLTSASSKPS. The residue at position 453 (Thr453) is a Phosphothreonine. 2 tandem repeats follow at residues 482–484 and 496–498. A 3 X 3 AA repeats of N-P-F region spans residues 482 to 581; it reads NPFLAPGAAA…AQPAGTTNPF (100 aa). Residue Ser514 is modified to Phosphoserine. Residues 579–581 form repeat 3; it reads NPF.

This sequence belongs to the epsin family. In terms of assembly, binds AP-2 and clathrin. Interacts with ITSN1. Interacts with UBQLN2. Binds EPS15. Ubiquitinated. Highly expressed in brain. Detected at lower levels in lung, liver, muscle and testis.

The protein resides in the cytoplasm. Its function is as follows. Plays a role in the formation of clathrin-coated invaginations and endocytosis. This chain is Epsin-2 (Epn2), found in Rattus norvegicus (Rat).